Here is a 168-residue protein sequence, read N- to C-terminus: Mitochondrial inner membrane protein SHH4 (168 aa).

The N-terminal 23 residues, Met-1–Ser-23, are a transit peptide targeting the mitochondrion. Residues Phe-24–Arg-65 are Mitochondrial matrix-facing. The chain crosses the membrane as a helical span at residues Gly-66–Ser-86. Residues Thr-87–Phe-92 lie on the Mitochondrial intermembrane side of the membrane. A helical membrane pass occupies residues Leu-93–Ile-113. A heme-binding site is contributed by Cys-101. An a ubiquinone-binding site is contributed by Tyr-112. Residues Ser-114–Lys-120 are Mitochondrial matrix-facing. The helical transmembrane segment at Val-121–Tyr-141 threads the bilayer. Topologically, residues Lys-142–Gln-168 are mitochondrial intermembrane.

This sequence belongs to the CybS family. As to quaternary structure, interacts with SDH3.

The protein localises to the mitochondrion inner membrane. Functionally, homolog of SDH4, but seems not to be a stoichiometric subunit of either the succinate dehydrogenase (SDH) complex or the mitochondrial inner membrane translocase TIM22 complex. This is Mitochondrial inner membrane protein SHH4 from Saccharomyces cerevisiae (strain ATCC 204508 / S288c) (Baker's yeast).